The sequence spans 180 residues: Protein PHLOEM PROTEIN 2-LIKE A9 (180 aa).

The segment at 1–21 (MSSQKSSHHKADSKMEQDNNR) is disordered. Over residues 9–21 (HKADSKMEQDNNR) the composition is skewed to basic and acidic residues.

The sequence is that of Protein PHLOEM PROTEIN 2-LIKE A9 (PP2A9) from Arabidopsis thaliana (Mouse-ear cress).